The following is a 404-amino-acid chain: Probable eukaryotic initiation factor 4A (404 aa).

The tract at residues 1 to 28 (MAQQGKVEPQDQDSFLDDQPGIRPIPSF) is disordered. A Q motif motif is present at residues 26–54 (PSFDDMPLHQNLLRGIYSHGFEKPSSIQQ). One can recognise a Helicase ATP-binding domain in the interval 57–231 (IVPFTRGGDI…KKFMRDPTRI (175 aa)). Position 70 to 77 (70 to 77 (AQSGTGKT)) interacts with ATP. A DEAD box motif is present at residues 179–182 (DEAD). The Helicase C-terminal domain maps to 242 to 402 (GIKQYFIAVE…ELPVDFAAYL (161 aa)).

Belongs to the DEAD box helicase family. eIF4A subfamily. EIF4F is a multi-subunit complex, the composition of which varies with external and internal environmental conditions. It is composed of at least EIF4A, EIF4E and EIF4G.

It carries out the reaction ATP + H2O = ADP + phosphate + H(+). Its function is as follows. ATP-dependent RNA helicase which is a subunit of the eIF4F complex involved in cap recognition and is required for mRNA binding to ribosome. In the current model of translation initiation, eIF4A unwinds RNA secondary structures in the 5'-UTR of mRNAs which is necessary to allow efficient binding of the small ribosomal subunit, and subsequent scanning for the initiator codon. This chain is Probable eukaryotic initiation factor 4A, found in Trypanosoma cruzi (strain CL Brener).